The sequence spans 122 residues: Large ribosomal subunit protein uL14 (122 aa).

This sequence belongs to the universal ribosomal protein uL14 family. In terms of assembly, part of the 50S ribosomal subunit. Forms a cluster with proteins L3 and L19. In the 70S ribosome, L14 and L19 interact and together make contacts with the 16S rRNA in bridges B5 and B8.

In terms of biological role, binds to 23S rRNA. Forms part of two intersubunit bridges in the 70S ribosome. This chain is Large ribosomal subunit protein uL14, found in Cytophaga hutchinsonii (strain ATCC 33406 / DSM 1761 / CIP 103989 / NBRC 15051 / NCIMB 9469 / D465).